The following is a 242-amino-acid chain: DNA repair protein RecO (242 aa).

This sequence belongs to the RecO family.

Involved in DNA repair and RecF pathway recombination. In Dechloromonas aromatica (strain RCB), this protein is DNA repair protein RecO.